A 513-amino-acid polypeptide reads, in one-letter code: ATP synthase subunit alpha (513 aa).

170 to 177 (GDRQTGKT) serves as a coordination point for ATP.

This sequence belongs to the ATPase alpha/beta chains family. In terms of assembly, F-type ATPases have 2 components, CF(1) - the catalytic core - and CF(0) - the membrane proton channel. CF(1) has five subunits: alpha(3), beta(3), gamma(1), delta(1), epsilon(1). CF(0) has four main subunits: a(1), b(1), b'(1) and c(9-12).

It is found in the cell inner membrane. The catalysed reaction is ATP + H2O + 4 H(+)(in) = ADP + phosphate + 5 H(+)(out). In terms of biological role, produces ATP from ADP in the presence of a proton gradient across the membrane. The alpha chain is a regulatory subunit. This is ATP synthase subunit alpha from Gloeobacter violaceus (strain ATCC 29082 / PCC 7421).